Reading from the N-terminus, the 148-residue chain is Probable DNA-directed RNA polymerases I, II, and III subunit RPABC3 (148 aa).

Residues 16-40 are non-specific ssDNA binding; the sequence is DPDGKKFDRVSRYFCDAESFKMELI.

The protein belongs to the eukaryotic RPB8 RNA polymerase subunit family. In terms of assembly, component of the RNA polymerase I (Pol I), RNA polymerase II (Pol II) and RNA polymerase III (Pol III) complexes consisting of at least 13, 12 and 17 subunits, respectively. Directly interacts with POLR2A.

It is found in the nucleus. DNA-dependent RNA polymerase catalyzes the transcription of DNA into RNA using the four ribonucleoside triphosphates as substrates. Common component of RNA polymerases I, II and III which synthesize ribosomal RNA precursors, mRNA precursors and many functional non-coding RNAs, and small RNAs, such as 5S rRNA and tRNAs, respectively. This chain is Probable DNA-directed RNA polymerases I, II, and III subunit RPABC3 (rpb-8), found in Caenorhabditis elegans.